A 349-amino-acid chain; its full sequence is Magnesium-protoporphyrin IX monomethyl ester [oxidative] cyclase (349 aa).

Belongs to the AcsF family. Requires Fe cation as cofactor.

The protein resides in the plastid. The protein localises to the chloroplast. The catalysed reaction is Mg-protoporphyrin IX 13-monomethyl ester + 3 NADPH + 3 O2 + 2 H(+) = 3,8-divinyl protochlorophyllide a + 3 NADP(+) + 5 H2O. It participates in porphyrin-containing compound metabolism; chlorophyll biosynthesis (light-independent). Catalyzes the formation of the isocyclic ring in chlorophyll biosynthesis. Mediates the cyclase reaction, which results in the formation of divinylprotochlorophyllide (Pchlide) characteristic of all chlorophylls from magnesium-protoporphyrin IX 13-monomethyl ester (MgPMME). This is Magnesium-protoporphyrin IX monomethyl ester [oxidative] cyclase from Pyropia yezoensis (Susabi-nori).